The primary structure comprises 359 residues: Mitochondrial calcium uniporter regulator 1 (359 aa).

Residues 1–68 (MDCGSVGGQR…ARGGVSRASP (68 aa)) lie on the Mitochondrial intermembrane side of the membrane. The chain crosses the membrane as a helical span at residues 69–85 (LLLLLLVPSPRLAAAAP). At 86–338 (RRQLGDWERS…LESHKLDNIK (253 aa)) the chain is on the mitochondrial matrix side. The stretch at 235–310 (EKSEFSALRA…VALHAQQDRA (76 aa)) forms a coiled coil. The chain crosses the membrane as a helical span at residues 339–358 (YLAGSIFTCLTVALGFYRLW). Position 359 (I359) is a topological domain, mitochondrial intermembrane.

Belongs to the CCDC90 family. Interacts (via coiled coil regions) with MCU; the interaction is direct. Interacts with SMDT1/EMRE; the interaction is direct. Interacts with PPIF. As to expression, ubiquitously expressed.

It localises to the mitochondrion inner membrane. Functionally, key regulator of mitochondrial calcium uniporter (MCU) required for calcium entry into mitochondrion. Plays a direct role in uniporter-mediated calcium uptake via a direct interaction with MCU. Probably involved in the assembly of the membrane components of the uniporter complex (uniplex). This chain is Mitochondrial calcium uniporter regulator 1, found in Homo sapiens (Human).